An 887-amino-acid polypeptide reads, in one-letter code: Alanine--tRNA ligase (887 aa).

Zn(2+) is bound by residues His-575, His-579, Cys-677, and His-681.

This sequence belongs to the class-II aminoacyl-tRNA synthetase family. Zn(2+) serves as cofactor.

It is found in the cytoplasm. It carries out the reaction tRNA(Ala) + L-alanine + ATP = L-alanyl-tRNA(Ala) + AMP + diphosphate. Its function is as follows. Catalyzes the attachment of alanine to tRNA(Ala) in a two-step reaction: alanine is first activated by ATP to form Ala-AMP and then transferred to the acceptor end of tRNA(Ala). Also edits incorrectly charged Ser-tRNA(Ala) and Gly-tRNA(Ala) via its editing domain. This is Alanine--tRNA ligase from Geobacillus kaustophilus (strain HTA426).